Reading from the N-terminus, the 360-residue chain is UDP-3-O-acylglucosamine N-acyltransferase (360 aa).

The active-site Proton acceptor is the histidine 256. The tract at residues 341 to 360 (EGSGAETAARPDDDRDEGRG) is disordered. Basic and acidic residues predominate over residues 349-360 (ARPDDDRDEGRG).

It belongs to the transferase hexapeptide repeat family. LpxD subfamily. In terms of assembly, homotrimer.

It catalyses the reaction a UDP-3-O-[(3R)-3-hydroxyacyl]-alpha-D-glucosamine + a (3R)-hydroxyacyl-[ACP] = a UDP-2-N,3-O-bis[(3R)-3-hydroxyacyl]-alpha-D-glucosamine + holo-[ACP] + H(+). It functions in the pathway bacterial outer membrane biogenesis; LPS lipid A biosynthesis. Its function is as follows. Catalyzes the N-acylation of UDP-3-O-acylglucosamine using 3-hydroxyacyl-ACP as the acyl donor. Is involved in the biosynthesis of lipid A, a phosphorylated glycolipid that anchors the lipopolysaccharide to the outer membrane of the cell. This Rhodopseudomonas palustris (strain TIE-1) protein is UDP-3-O-acylglucosamine N-acyltransferase.